A 1183-amino-acid chain; its full sequence is Probable RNA-dependent RNA polymerase 4 (1183 aa).

The protein belongs to the RdRP family. As to expression, expressed in shoot apical meristem (SAM) and panicles.

It carries out the reaction RNA(n) + a ribonucleoside 5'-triphosphate = RNA(n+1) + diphosphate. Its function is as follows. Probably involved in the RNA silencing pathway and required for the generation of small interfering RNAs (siRNAs). This is Probable RNA-dependent RNA polymerase 4 (RDR4) from Oryza sativa subsp. japonica (Rice).